The chain runs to 485 residues: Adenosylhomocysteinase (485 aa).

Substrate-binding residues include Thr-60, Asp-146, and Glu-208. Thr-209–Thr-211 is a binding site for NAD(+). Substrate is bound by residues Lys-238 and Asp-242. NAD(+)-binding positions include Asn-243, Gly-272–Gly-277, Glu-295, Asn-330, Ile-351–His-353, and Asn-399.

The protein belongs to the adenosylhomocysteinase family. NAD(+) is required as a cofactor.

Its subcellular location is the cytoplasm. The enzyme catalyses S-adenosyl-L-homocysteine + H2O = L-homocysteine + adenosine. It functions in the pathway amino-acid biosynthesis; L-homocysteine biosynthesis; L-homocysteine from S-adenosyl-L-homocysteine: step 1/1. May play a key role in the regulation of the intracellular concentration of adenosylhomocysteine. The protein is Adenosylhomocysteinase of Streptomyces avermitilis (strain ATCC 31267 / DSM 46492 / JCM 5070 / NBRC 14893 / NCIMB 12804 / NRRL 8165 / MA-4680).